A 199-amino-acid polypeptide reads, in one-letter code: N-(5'-phosphoribosyl)anthranilate isomerase (199 aa).

The protein belongs to the TrpF family.

The catalysed reaction is N-(5-phospho-beta-D-ribosyl)anthranilate = 1-(2-carboxyphenylamino)-1-deoxy-D-ribulose 5-phosphate. Its pathway is amino-acid biosynthesis; L-tryptophan biosynthesis; L-tryptophan from chorismate: step 3/5. This Streptococcus pneumoniae (strain Taiwan19F-14) protein is N-(5'-phosphoribosyl)anthranilate isomerase.